A 126-amino-acid chain; its full sequence is MAILGLGTDIVEIARIEAVIARSGERLARRVLSDNEWEIWKTHHQPVRFLAKRFAVKEAAAKAFGTGIRNGLAFNQFEVFNDELGKPRLRLWGEALKLAEKLGVVNMHVTLADERHYACATVIIES.

Mg(2+)-binding residues include Asp9 and Glu58.

The protein belongs to the P-Pant transferase superfamily. AcpS family. It depends on Mg(2+) as a cofactor.

It is found in the cytoplasm. The enzyme catalyses apo-[ACP] + CoA = holo-[ACP] + adenosine 3',5'-bisphosphate + H(+). Transfers the 4'-phosphopantetheine moiety from coenzyme A to a Ser of acyl-carrier-protein. In Escherichia coli O127:H6 (strain E2348/69 / EPEC), this protein is Holo-[acyl-carrier-protein] synthase.